The chain runs to 317 residues: Melanocyte-stimulating hormone receptor (317 aa).

The Extracellular portion of the chain corresponds to 1–37; sequence MPVQGSLRSLVGAVNSTPTASPHLRPATNQTEPQCLE. N-linked (GlcNAc...) asparagine glycosylation is present at N29. Residues 38 to 63 form a helical membrane-spanning segment; that stretch reads VSVPVGLFLCLGLVSLVENTLVVAVI. At 64 to 72 the chain is on the cytoplasmic side; sequence AKNRNLHSP. The chain crosses the membrane as a helical span at residues 73–93; that stretch reads MYCFICCLALSDLLVSVSNVL. The Extracellular portion of the chain corresponds to 94–118; that stretch reads KTAVLLLLEAGALAAQATVVQQLGN. A helical membrane pass occupies residues 119–140; the sequence is VINMLICSSMVSSLCFLGAIAM. Residues 141–163 lie on the Cytoplasmic side of the membrane; sequence DRYISIFYALRYHSIVTLARARR. The helical transmembrane segment at 164–183 threads the bilayer; sequence AIAAVWVASILSSILFFTYY. Topologically, residues 184–191 are extracellular; that stretch reads DRTAALLC. The chain crosses the membrane as a helical span at residues 192–211; it reads LVVFFLAMLVLMAVLYVHML. The Cytoplasmic segment spans residues 212-240; the sequence is TQACQHAQGIARLHKRQHPVQQGWGLKGA. Residues 241 to 266 form a helical membrane-spanning segment; that stretch reads ATLAVLLGVFFLCWGPLFLHLTLIAV. At 267-279 the chain is on the extracellular side; that stretch reads CPQHPTCNCIVKN. A helical transmembrane segment spans residues 280–300; that stretch reads FKLFLALIICNAIVDPLIYAF. Topologically, residues 301–317 are cytoplasmic; the sequence is RSQELRKTLKEVLLFSW.

Belongs to the G-protein coupled receptor 1 family. In terms of assembly, interacts with MGRN1, but does not undergo MGRN1-mediated ubiquitination; this interaction competes with GNAS-binding and thus inhibits agonist-induced cAMP production. Interacts with OPN3; the interaction results in a decrease in MC1R-mediated cAMP signaling and ultimately a decrease in melanin production in melanocytes.

Its subcellular location is the cell membrane. Receptor for MSH (alpha, beta and gamma) and ACTH. The activity of this receptor is mediated by G proteins which activate adenylate cyclase. Mediates melanogenesis, the production of eumelanin (black/brown) and phaeomelanin (red/yellow), via regulation of cAMP signaling in melanocytes. This is Melanocyte-stimulating hormone receptor (MC1R) from Varecia rubra (Red ruffed lemur).